Reading from the N-terminus, the 36-residue chain is Photosystem I reaction center subunit VIII (36 aa).

The helical transmembrane segment at 9-29 (IFVPLVGLVFPAIAMASLSLY) threads the bilayer.

Belongs to the PsaI family.

It localises to the plastid. It is found in the chloroplast thylakoid membrane. Its function is as follows. May help in the organization of the PsaL subunit. The sequence is that of Photosystem I reaction center subunit VIII from Phalaenopsis aphrodite subsp. formosana (Moth orchid).